We begin with the raw amino-acid sequence, 143 residues long: Cofilin/actin-depolymerizing factor homolog 2 (143 aa).

Residues 4-141 enclose the ADF-H domain; that stretch reads GVKVSDECVY…FEDELRTIIL (138 aa).

Belongs to the actin-binding proteins ADF family. In terms of assembly, interacts with monomeric actin, does not bind to actin polymers.

The protein localises to the cytoplasm. It is found in the cytoskeleton. In terms of biological role, not involved in actin polymerisation, instead functions to stimulate nucleotide exchange on monomeric actin and influence turnover of the small amount of cytosolic actin microfilaments. Essential for erythrocytic schizogony. This is Cofilin/actin-depolymerizing factor homolog 2 from Plasmodium falciparum (isolate 3D7).